The sequence spans 238 residues: uncharacterized protein (238 aa).

The N-terminal stretch at 1 to 20 (MNNVKLLIAGSAFFAMSAQA) is a signal peptide.

This sequence to E.coli GltF.

This is an uncharacterized protein from Escherichia coli (strain K12).